Here is a 322-residue protein sequence, read N- to C-terminus: tRNA dimethylallyltransferase (322 aa).

12–19 is an ATP binding site; that stretch reads GPTAAGKT. 14–19 serves as a coordination point for substrate; that stretch reads TAAGKT. Interaction with substrate tRNA regions lie at residues 37–40 and 160–164; these read DSAL and QRLIR.

Belongs to the IPP transferase family. Monomer. Requires Mg(2+) as cofactor.

The enzyme catalyses adenosine(37) in tRNA + dimethylallyl diphosphate = N(6)-dimethylallyladenosine(37) in tRNA + diphosphate. Catalyzes the transfer of a dimethylallyl group onto the adenine at position 37 in tRNAs that read codons beginning with uridine, leading to the formation of N6-(dimethylallyl)adenosine (i(6)A). The protein is tRNA dimethylallyltransferase of Pseudomonas putida (Arthrobacter siderocapsulatus).